Consider the following 31-residue polypeptide: Cytochrome b6-f complex subunit 6 (31 aa).

Residues 3–23 traverse the membrane as a helical segment; the sequence is AIVAYIGFLALFTGIAAGLLF.

The protein belongs to the PetL family. As to quaternary structure, the 4 large subunits of the cytochrome b6-f complex are cytochrome b6, subunit IV (17 kDa polypeptide, PetD), cytochrome f and the Rieske protein, while the 4 small subunits are PetG, PetL, PetM and PetN. The complex functions as a dimer.

It localises to the cellular thylakoid membrane. Component of the cytochrome b6-f complex, which mediates electron transfer between photosystem II (PSII) and photosystem I (PSI), cyclic electron flow around PSI, and state transitions. PetL is important for photoautotrophic growth as well as for electron transfer efficiency and stability of the cytochrome b6-f complex. The chain is Cytochrome b6-f complex subunit 6 from Nostoc sp. (strain PCC 7120 / SAG 25.82 / UTEX 2576).